We begin with the raw amino-acid sequence, 92 residues long: MTRSLKKNPFVANHLLEKVEKLNMREEKKIIVTWSRSSTIIPTMIGHTIAIHNGREHLPIYITDRMVGHKLGEFAPTLTFRGHARNDNRSRR.

Belongs to the universal ribosomal protein uS19 family.

The protein resides in the plastid. The protein localises to the chloroplast. Its function is as follows. Protein S19 forms a complex with S13 that binds strongly to the 16S ribosomal RNA. This chain is Small ribosomal subunit protein uS19c, found in Chloranthus spicatus (Chulantree).